Reading from the N-terminus, the 389-residue chain is Succinate--CoA ligase [ADP-forming] subunit beta (389 aa).

An ATP-grasp domain is found at 9-244; that stretch reads KEIFRSMGVA…LDEEDPKEIE (236 aa). Residues Lys-46, 53–55, Glu-99, Cys-102, and Glu-107 contribute to the ATP site; that span reads GRG. Mg(2+)-binding residues include Asn-199 and Asp-213. Substrate contacts are provided by residues Asn-264 and 321–323; that span reads GIM.

It belongs to the succinate/malate CoA ligase beta subunit family. As to quaternary structure, heterotetramer of two alpha and two beta subunits. Requires Mg(2+) as cofactor.

It catalyses the reaction succinate + ATP + CoA = succinyl-CoA + ADP + phosphate. The catalysed reaction is GTP + succinate + CoA = succinyl-CoA + GDP + phosphate. The protein operates within carbohydrate metabolism; tricarboxylic acid cycle; succinate from succinyl-CoA (ligase route): step 1/1. Functionally, succinyl-CoA synthetase functions in the citric acid cycle (TCA), coupling the hydrolysis of succinyl-CoA to the synthesis of either ATP or GTP and thus represents the only step of substrate-level phosphorylation in the TCA. The beta subunit provides nucleotide specificity of the enzyme and binds the substrate succinate, while the binding sites for coenzyme A and phosphate are found in the alpha subunit. The protein is Succinate--CoA ligase [ADP-forming] subunit beta of Macrococcus caseolyticus (strain JCSC5402) (Macrococcoides caseolyticum).